The following is a 214-amino-acid chain: Protein verrocchio (214 aa).

In terms of assembly, probably homomultimerizes. Component of the MTV complex, composed of moi/modigliani, tea and ver/verrocchio. Interacts with moi/modigliani and tea (via C-terminus); the interactions are direct and require fully intact moi/modigliani and ver/verrocchio. The MTV complex is recruited to telomeres by the HipHop-HOAP complex, consisting of HipHop, cav/HOAP and Su(var)205/HP1 to form the terminin telomere-capping complex. Interacts with cav/HOAP; the interaction is direct. Interacts with Su(var)205/HP1; the interaction is indirect and probably requires cav/HOAP or moi/modigliani. Probably interacts with peo (via N-terminus and UBC domain).

It localises to the nucleus. The protein resides in the chromosome. It is found in the telomere. Part of the MTV complex that associates with the HipHop-HOAP complex to form the terminin telomere-capping complex involved in telomere maintenance and prevention of telomere fusion. As part of the MTV complex binds single stranded DNA in a sequence-independent manner, protecting it from degradation. The protein is Protein verrocchio of Drosophila melanogaster (Fruit fly).